Reading from the N-terminus, the 255-residue chain is Acetylglutamate kinase (255 aa).

Substrate is bound by residues 40–41 (GG), Arg-62, and Asn-153.

It belongs to the acetylglutamate kinase family. ArgB subfamily.

The protein localises to the cytoplasm. It catalyses the reaction N-acetyl-L-glutamate + ATP = N-acetyl-L-glutamyl 5-phosphate + ADP. It functions in the pathway amino-acid biosynthesis; L-arginine biosynthesis; N(2)-acetyl-L-ornithine from L-glutamate: step 2/4. Catalyzes the ATP-dependent phosphorylation of N-acetyl-L-glutamate. This is Acetylglutamate kinase from Bacillus cereus (strain ZK / E33L).